A 2030-amino-acid polypeptide reads, in one-letter code: Dedicator of cytokinesis protein 3 (2030 aa).

Residues E6–A67 enclose the SH3 domain. A C2 DOCK-type domain is found at R421–S599. Positions K1228–K1635 constitute a DOCKER domain. Disordered stretches follow at residues S1641 to I1662, S1734 to D1771, D1849 to D1927, and Q1951 to Q2030. The residue at position 1658 (S1658) is a Phosphoserine. Residues S1734–Q1754 show a composition bias toward low complexity. Residues M1755–G1765 show a composition bias toward polar residues. A compositionally biased stretch (low complexity) spans G1880–G1902. Pro residues predominate over residues P1967–P1977. An SH3-binding motif is present at residues P1970 to K1976. 2 stretches are compositionally biased toward basic and acidic residues: residues A1984–R2001 and A2014–Q2030.

This sequence belongs to the DOCK family. Interacts with presenilin proteins PSEN1 and PSEN2. Interacts with CRK. In terms of tissue distribution, in normal brains, it is localized in the neuropil, and occasionally in the pyramidal cells, while in Alzheimer disease brains, it is associated with neurofibrillary tangles.

It localises to the cytoplasm. Its function is as follows. Potential guanine nucleotide exchange factor (GEF). GEF proteins activate some small GTPases by exchanging bound GDP for free GTP. Its interaction with presenilin proteins as well as its ability to stimulate Tau/MAPT phosphorylation suggest that it may be involved in Alzheimer disease. Ectopic expression in nerve cells decreases the secretion of amyloid-beta APBA1 protein and lowers the rate of cell-substratum adhesion, suggesting that it may affect the function of some small GTPase involved in the regulation of actin cytoskeleton or cell adhesion receptors. This chain is Dedicator of cytokinesis protein 3 (DOCK3), found in Homo sapiens (Human).